The sequence spans 330 residues: DNA-directed RNA polymerase subunit alpha (330 aa).

The segment at 1–237 is alpha N-terminal domain (alpha-NTD); that stretch reads MYTEINEMLT…RQLHAFVDMK (237 aa). The tract at residues 251–330 is alpha C-terminal domain (alpha-CTD); it reads FDPVLLRSVD…ENWPPASLGE (80 aa).

Belongs to the RNA polymerase alpha chain family. In terms of assembly, homodimer. The RNAP catalytic core consists of 2 alpha, 1 beta, 1 beta' and 1 omega subunit. When a sigma factor is associated with the core the holoenzyme is formed, which can initiate transcription.

The catalysed reaction is RNA(n) + a ribonucleoside 5'-triphosphate = RNA(n+1) + diphosphate. Functionally, DNA-dependent RNA polymerase catalyzes the transcription of DNA into RNA using the four ribonucleoside triphosphates as substrates. The polypeptide is DNA-directed RNA polymerase subunit alpha (Legionella pneumophila (strain Paris)).